The chain runs to 481 residues: Glutamate--tRNA ligase (481 aa).

The 'HIGH' region motif lies at 10–20 (PSPTGHLHIGN). Residues 251 to 255 (KLSKR) carry the 'KMSKS' region motif. An ATP-binding site is contributed by Lys-254.

The protein belongs to the class-I aminoacyl-tRNA synthetase family. Glutamate--tRNA ligase type 1 subfamily. In terms of assembly, monomer.

It is found in the cytoplasm. The enzyme catalyses tRNA(Glu) + L-glutamate + ATP = L-glutamyl-tRNA(Glu) + AMP + diphosphate. Functionally, catalyzes the attachment of glutamate to tRNA(Glu) in a two-step reaction: glutamate is first activated by ATP to form Glu-AMP and then transferred to the acceptor end of tRNA(Glu). In Exiguobacterium sibiricum (strain DSM 17290 / CCUG 55495 / CIP 109462 / JCM 13490 / 255-15), this protein is Glutamate--tRNA ligase.